A 573-amino-acid polypeptide reads, in one-letter code: Kinesin light chain 1 (573 aa).

Residues 27–156 (KTKQVIQGLE…HLEFMNQLKK (130 aa)) are a coiled coil. A compositionally biased stretch (basic and acidic residues) spans 155–176 (KKYDDDISPSEDKDTDSTKEPL). Positions 155–203 (KKYDDDISPSEDKDTDSTKEPLDDLFPNDEDDPGQGIQQQHSSAAAAAQ) are disordered. At serine 162 the chain carries Phosphoserine. Over residues 188 to 203 (GQGIQQQHSSAAAAAQ) the composition is skewed to low complexity. TPR repeat units lie at residues 213-246 (LRTLHNLVIQYASQGRYEVAVPLCKQALEDLEKT), 255-288 (ATMLNILALVYRDQNKYKDAANLLNDALAIREKT), 297-330 (AATLNNLAVLYGKRGKYKEAEPLCKRALEIREKV), 339-372 (AKQLNNLALLCQNQGKYEEVEYYYQRALEIYQTK), and 381-414 (AKTKNNLASCYLKQGKFKQAETLYKEILTRAHER). Phosphotyrosine is present on tyrosine 449. Serine 460 carries the post-translational modification Phosphoserine. A TPR 6 repeat occupies 464–497 (TTTLKNLGALYRRQGKFEAAETLEEAAMRSRKQG). Phosphoserine; by AMPK is present on residues serine 521 and serine 524. Phosphoserine is present on glutamate 547. The disordered stretch occupies residues 553–573 (SGRASFCGKRQQQQWPGRRHR).

It belongs to the kinesin light chain family. In terms of assembly, oligomeric complex composed of two heavy chains and two light chains. Interacts with SPAG9. Interacts with ATCAY; may link mitochondria to KLC1 and regulate mitochondria localization into neuron projections. Interacts (via TPR repeats) with TOR1A; the interaction associates TOR1A with the kinesin oligomeric complex. Interacts with BORCS5. Interacts with MAPK8IP3/JIP3 and NTRK2/TRKB; interaction with NTRK2/TRKB is mediated by MAPK8IP3/JIP3. Interacts with CLSTN1; phosphorylation at Ser-460 inhibits interaction with CLSTN1. (Microbial infection) Interacts with adenovirus hexon-interlacing protein; this interaction leads to capsid disruption at the nuclear pore complex during virus entry into host cell. Post-translationally, phosphorylation at Ser-460 by ERK inhibits interaction with CLSTN1 and localization to cytoplasmic vesicles. In terms of tissue distribution, found in a variety of tissues. Mostly abundant in brain and spine.

The protein localises to the cell projection. The protein resides in the growth cone. It is found in the cytoplasmic vesicle. Its subcellular location is the cytoplasm. It localises to the cytoskeleton. Kinesin is a microtubule-associated force-producing protein that may play a role in organelle transport. The light chain may function in coupling of cargo to the heavy chain or in the modulation of its ATPase activity. This chain is Kinesin light chain 1 (KLC1), found in Homo sapiens (Human).